Reading from the N-terminus, the 98-residue chain is Large ribosomal subunit protein uL23 (98 aa).

It belongs to the universal ribosomal protein uL23 family. As to quaternary structure, part of the 50S ribosomal subunit. Contacts protein L29, and trigger factor when it is bound to the ribosome.

Functionally, one of the early assembly proteins it binds 23S rRNA. One of the proteins that surrounds the polypeptide exit tunnel on the outside of the ribosome. Forms the main docking site for trigger factor binding to the ribosome. This chain is Large ribosomal subunit protein uL23, found in Methylobacterium sp. (strain 4-46).